A 130-amino-acid polypeptide reads, in one-letter code: Small ribosomal subunit protein uS8 (130 aa).

This sequence belongs to the universal ribosomal protein uS8 family. In terms of assembly, part of the 30S ribosomal subunit.

Functionally, one of the primary rRNA binding proteins, it binds directly to 16S rRNA central domain where it helps coordinate assembly of the platform of the 30S subunit. This is Small ribosomal subunit protein uS8 from Thermococcus onnurineus (strain NA1).